A 220-amino-acid polypeptide reads, in one-letter code: 7-cyano-7-deazaguanine synthase (220 aa).

ATP is bound at residue 10–20; it reads FSGGQDSTTCL. Cys186, Cys195, Cys198, and Cys201 together coordinate Zn(2+).

The protein belongs to the QueC family. Homodimer. The cofactor is Zn(2+).

The enzyme catalyses 7-carboxy-7-deazaguanine + NH4(+) + ATP = 7-cyano-7-deazaguanine + ADP + phosphate + H2O + H(+). Its pathway is purine metabolism; 7-cyano-7-deazaguanine biosynthesis. Its function is as follows. Catalyzes the ATP-dependent conversion of 7-carboxy-7-deazaguanine (CDG) to 7-cyano-7-deazaguanine (preQ(0)). The protein is 7-cyano-7-deazaguanine synthase of Bacillus thuringiensis (strain Al Hakam).